Here is a 237-residue protein sequence, read N- to C-terminus: MPVKKKRKAPGVAAAVAEDAGLKKCKISSYCRSQPPARLISGEEDFSRKKCLAWFYEYAGPDEVVGPEGMEKFCEDIGVEPENIIMLVLAWKLEAESMGFFTKEEWLKGMTSLQCDCTEKLQSRFDFLRSQLNDISSFKNIYRYAFDFARDKDQRSLDIDTAKSMLALLLGRTWPLFSVFYQYLEQSKYRVMNKDQWYNVLEFSRTVHADLSNYDEDGAWPVLLDEFVEWQKIRQTS.

Ser41 bears the Phosphoserine mark. In terms of domain architecture, DCUN1 spans 46–232 (FSRKKCLAWF…LLDEFVEWQK (187 aa)).

As to quaternary structure, part of a complex that contains DCUN1D5, CUL1 and RBX1; this interaction is bridged by CUL1. Interacts (via the DCUN1 domain) with the unneddylated cullins: interacts with CUL1, CUL2, CUL3, CUL4A, CUL4B and CUL5; these interactions promote the cullin neddylation and the identity of the cullin dictates the affinity of the interaction. Interacts (via DCUN1 domain) with UBE2M (N-terminally acetylated form) and probably with UBE2F (N-terminally acetylated form). May also interact with regulators or subunits of cullin-RING ligases such as RBX1, RNF7, ELOB and DDB1; these interactions are bridged by cullins. Interacts with CAND1; this interaction is bridged by cullins and strongly inhibits the neddylation of cullins. These CAND-cullin-DCNL complexes can only be neddylated in the presence of a substrate adapter. Phosphorylation at Ser-41 is independent of cullin's interaction. Phosphorylated in response to both TICAM1 and MYD88 dependent Toll-like receptor (TLR) pathway activation. Phosphorylated in response to IL1B stimulation.

The protein localises to the nucleus. It localises to the cytoplasm. The protein resides in the cytoskeleton. It is found in the spindle. In terms of biological role, contributes to the neddylation of all cullins by transferring NEDD8 from N-terminally acetylated NEDD8-conjugating E2s enzyme to different cullin C-terminal domain-RBX complexes which is necessary for the activation of cullin-RING E3 ubiquitin ligases (CRLs). May play a role in DNA damage response and may participate in cell proliferation and anchorage-independent cell growth. The sequence is that of DCN1-like protein 5 from Rattus norvegicus (Rat).